A 178-amino-acid polypeptide reads, in one-letter code: Peptide deformylase (178 aa).

Fe cation is bound by residues Cys102 and His144. Glu145 is an active-site residue. A Fe cation-binding site is contributed by His148.

The protein belongs to the polypeptide deformylase family. Fe(2+) is required as a cofactor.

It catalyses the reaction N-terminal N-formyl-L-methionyl-[peptide] + H2O = N-terminal L-methionyl-[peptide] + formate. Removes the formyl group from the N-terminal Met of newly synthesized proteins. Requires at least a dipeptide for an efficient rate of reaction. N-terminal L-methionine is a prerequisite for activity but the enzyme has broad specificity at other positions. This chain is Peptide deformylase, found in Leptospira borgpetersenii serovar Hardjo-bovis (strain JB197).